Consider the following 422-residue polypeptide: Histidine--tRNA ligase (422 aa).

The protein belongs to the class-II aminoacyl-tRNA synthetase family. Homodimer.

Its subcellular location is the cytoplasm. It catalyses the reaction tRNA(His) + L-histidine + ATP = L-histidyl-tRNA(His) + AMP + diphosphate + H(+). The protein is Histidine--tRNA ligase of Ruthia magnifica subsp. Calyptogena magnifica.